Consider the following 375-residue polypeptide: 23S rRNA (uracil(747)-C(5))-methyltransferase RlmC (375 aa).

Positions 3, 11, 14, and 87 each coordinate [4Fe-4S] cluster. S-adenosyl-L-methionine is bound by residues Gln212, Phe241, Glu262, and Asn307. Residue Cys334 is the Nucleophile of the active site.

The protein belongs to the class I-like SAM-binding methyltransferase superfamily. RNA M5U methyltransferase family. RlmC subfamily.

It carries out the reaction uridine(747) in 23S rRNA + S-adenosyl-L-methionine = 5-methyluridine(747) in 23S rRNA + S-adenosyl-L-homocysteine + H(+). Its function is as follows. Catalyzes the formation of 5-methyl-uridine at position 747 (m5U747) in 23S rRNA. This is 23S rRNA (uracil(747)-C(5))-methyltransferase RlmC from Escherichia coli O127:H6 (strain E2348/69 / EPEC).